The primary structure comprises 363 residues: Biotin synthase (363 aa).

The Radical SAM core domain maps to 38–266; sequence NTVQVSTLLS…ETQVRLSAGR (229 aa). [4Fe-4S] cluster contacts are provided by Cys53, Cys57, and Cys60. The [2Fe-2S] cluster site is built by Cys97, Cys129, Cys189, and Arg261. The tract at residues 315–363 is disordered; it reads KAFEKKSQPESVAAEKSKYQSQGEKPRWSRPEHKIDRNLEAQQNAKTKA. Positions 316–353 are enriched in basic and acidic residues; the sequence is AFEKKSQPESVAAEKSKYQSQGEKPRWSRPEHKIDRNL. Residues 354-363 show a composition bias toward polar residues; the sequence is EAQQNAKTKA.

This sequence belongs to the radical SAM superfamily. Biotin synthase family. In terms of assembly, homodimer. It depends on [4Fe-4S] cluster as a cofactor. Requires [2Fe-2S] cluster as cofactor.

It carries out the reaction (4R,5S)-dethiobiotin + (sulfur carrier)-SH + 2 reduced [2Fe-2S]-[ferredoxin] + 2 S-adenosyl-L-methionine = (sulfur carrier)-H + biotin + 2 5'-deoxyadenosine + 2 L-methionine + 2 oxidized [2Fe-2S]-[ferredoxin]. Its pathway is cofactor biosynthesis; biotin biosynthesis; biotin from 7,8-diaminononanoate: step 2/2. Its function is as follows. Catalyzes the conversion of dethiobiotin (DTB) to biotin by the insertion of a sulfur atom into dethiobiotin via a radical-based mechanism. This Christiangramia forsetii (strain DSM 17595 / CGMCC 1.15422 / KT0803) (Gramella forsetii) protein is Biotin synthase.